The sequence spans 61 residues: Large ribosomal subunit protein bL32 (61 aa).

The interval 1 to 44 is disordered; it reads MAVQQNRKSRSRRDMRRSHDALTENALTVDQTTGETHRRHHVTK. Residues 7-16 show a composition bias toward basic residues; that stretch reads RKSRSRRDMR. Over residues 25–34 the composition is skewed to polar residues; the sequence is NALTVDQTTG.

Belongs to the bacterial ribosomal protein bL32 family.

The chain is Large ribosomal subunit protein bL32 from Acinetobacter baylyi (strain ATCC 33305 / BD413 / ADP1).